Reading from the N-terminus, the 351-residue chain is uncharacterized protein (351 aa).

A signal peptide spans 1-27; the sequence is MKNKKRVLIASSLSCAILLLSAATTQA. The interval 28–71 is disordered; sequence NSAHKDSQDQNKKEHVDKSQQKDKRNVTNKDKNSTVPDDIGKNG. Basic and acidic residues predominate over residues 30-60; it reads AHKDSQDQNKKEHVDKSQQKDKRNVTNKDKN.

Belongs to the aerolysin family.

This is an uncharacterized protein from Staphylococcus aureus (strain N315).